The chain runs to 298 residues: Tyrosine recombinase XerD (298 aa).

Residues 2–87 enclose the Core-binding (CB) domain; that stretch reads KQDLARIEQF…AVRRLFQYLY (86 aa). Residues 108-292 form the Tyr recombinase domain; sequence RLPKDLSEAQ…ATERLRQLHQ (185 aa). Active-site residues include R148, K172, H244, R247, and H270. Y279 (O-(3'-phospho-DNA)-tyrosine intermediate) is an active-site residue.

The protein belongs to the 'phage' integrase family. XerD subfamily. Forms a cyclic heterotetrameric complex composed of two molecules of XerC and two molecules of XerD, in which XerC interacts with XerD via its C-terminal region, XerD interacts with XerC via its C-terminal region and so on.

The protein localises to the cytoplasm. Its activity is regulated as follows. FtsK may regulate the catalytic switch between XerC and XerD in the heterotetrameric complex during the two steps of the recombination process. Its function is as follows. Site-specific tyrosine recombinase, which acts by catalyzing the cutting and rejoining of the recombining DNA molecules. Binds cooperatively to specific DNA consensus sequences that are separated from XerC binding sites by a short central region, forming the heterotetrameric XerC-XerD complex that recombines DNA substrates. The complex is essential to convert dimers of the bacterial chromosome into monomers to permit their segregation at cell division. It also contributes to the segregational stability of plasmids. In the complex XerD specifically exchanges the bottom DNA strands. The protein is Tyrosine recombinase XerD of Escherichia coli O157:H7.